We begin with the raw amino-acid sequence, 332 residues long: Glyceraldehyde-3-phosphate dehydrogenase 1 (332 aa).

Residues R11, I12, D33, and T120 each coordinate NAD(+). D-glyceraldehyde 3-phosphate contacts are provided by residues S149 to T151, T180, T209 to G210, and R232. The active-site Nucleophile is the C150. NAD(+) contacts are provided by N314 and Y318.

Belongs to the glyceraldehyde-3-phosphate dehydrogenase family. In terms of assembly, homotetramer.

It localises to the cytoplasm. It catalyses the reaction D-glyceraldehyde 3-phosphate + phosphate + NAD(+) = (2R)-3-phospho-glyceroyl phosphate + NADH + H(+). The catalysed reaction is NADH + H2O = (6R)-NADHX. It carries out the reaction NADH + H2O = (6S)-NADHX. The enzyme catalyses NADPH + H2O = (6R)-NADPHX. It catalyses the reaction NADPH + H2O = (6S)-NADPHX. It functions in the pathway carbohydrate degradation; glycolysis; pyruvate from D-glyceraldehyde 3-phosphate: step 1/5. Functionally, glyceraldehyde-3-phosphate dehydrogenase (GAPDH) involved in glycolysis and gluconeogenesis. Catalyzes the reaction of glyceraldehyde-3-phosphate to 1,3 bis-phosphoglycerate. The contribution of the TDH1, TDH2, and TDH3 to the total glyceraldehyde-3-phosphate dehydrogenase activity is 10-15, 25-30, and 50-60%, respectively. May be involved in a process other than glycolysis because it is synthesized by cells in stationary phase. In terms of biological role, as a side activity, catalyzes the hydration of the nicotinamide ring of NADH or NADPH at the C6 position to give the corresponding hydrates, NADHX and NADPHX, which exist as R and S epimers, that cannot act as electron donors or acceptors and inhibit several dehydrogenases, making them toxic. This Saccharomyces cerevisiae (strain ATCC 204508 / S288c) (Baker's yeast) protein is Glyceraldehyde-3-phosphate dehydrogenase 1.